We begin with the raw amino-acid sequence, 470 residues long: Glucose-1-phosphate adenylyltransferase large subunit 1 (470 aa).

Belongs to the bacterial/plant glucose-1-phosphate adenylyltransferase family. As to quaternary structure, heterotetramer. Prominently expressed in the leaves and a weaker expression is seen in the tubers.

The protein localises to the plastid. The protein resides in the chloroplast. Its subcellular location is the amyloplast. The catalysed reaction is alpha-D-glucose 1-phosphate + ATP + H(+) = ADP-alpha-D-glucose + diphosphate. It participates in glycan biosynthesis; starch biosynthesis. Activated by 3'phosphoglycerate, inhibited by orthophosphate. Allosteric regulation. This protein plays a role in synthesis of starch. It catalyzes the synthesis of the activated glycosyl donor, ADP-glucose from Glc-1-P and ATP. The polypeptide is Glucose-1-phosphate adenylyltransferase large subunit 1 (AGPS1) (Solanum tuberosum (Potato)).